A 68-amino-acid chain; its full sequence is MKTITLNIKGIHCGCCVKSLTQVLTELDGVQSADVQLEGKANITFDENRVNVAQLIEVIEDAGFDATE.

In terms of domain architecture, HMA spans 2–67; sequence KTITLNIKGI…VIEDAGFDAT (66 aa). The a metal cation site is built by Cys-13 and Cys-16.

This is an uncharacterized protein from Haemophilus influenzae (strain ATCC 51907 / DSM 11121 / KW20 / Rd).